A 309-amino-acid chain; its full sequence is L-arabinose 1-dehydrogenase (NAD(P)(+)) (309 aa).

Residues Ile-15 and Ser-37–Arg-38 contribute to the NADP(+) site. Lys-91 functions as the Proton donor in the catalytic mechanism. Asp-169 is a binding site for NADP(+).

It belongs to the Gfo/Idh/MocA family. As to quaternary structure, monomer.

It carries out the reaction alpha-L-arabinopyanose + NAD(+) = L-arabinono-1,4-lactone + NADH + H(+). The enzyme catalyses alpha-L-arabinopyanose + NADP(+) = L-arabinono-1,4-lactone + NADPH + H(+). The catalysed reaction is D-galactose + NAD(+) = D-galactono-1,4-lactone + NADH + H(+). It catalyses the reaction D-galactose + NADP(+) = D-galactono-1,5-lactone + NADPH + H(+). It functions in the pathway carbohydrate degradation; L-arabinose degradation via L-arabinono-1,4-lactone pathway. In terms of biological role, catalyzes the NAD(P)(+)-dependent conversion of L-arabinose to L-arabino-gamma-lactone. Is involved in a degradation pathway of L-arabinose that allows A.brasilense to grow on L-arabinose as a sole carbon source. Prefers NADP(+) to NAD(+) as electron acceptor. Displays high catalytic efficiency for both L-arabinose and D-galactose in vitro. However, the enzyme appears to be involved in the metabolism of L-arabinose but not D-galactose in vivo. To a lesser extent, is also active on D-talose and D-xylose as substrates in vitro, but not with D-arabinose, D-glucose, D-ribose, L-xylose, L-mannose, L-lyxose, and D-fructose. This Azospirillum brasilense protein is L-arabinose 1-dehydrogenase (NAD(P)(+)) (araA).